The following is a 220-amino-acid chain: Iron-sulfur cluster repair protein YtfE (220 aa).

The protein belongs to the RIC family. YtfE subfamily. As to quaternary structure, homodimer.

The protein localises to the cytoplasm. Functionally, di-iron-containing protein involved in the repair of iron-sulfur clusters damaged by oxidative and nitrosative stress conditions. The protein is Iron-sulfur cluster repair protein YtfE of Salmonella choleraesuis (strain SC-B67).